Consider the following 617-residue polypeptide: Chaperone protein DnaK (617 aa).

Residues lysine 579–lysine 617 are disordered. Residues alanine 580 to alanine 594 are compositionally biased toward low complexity. Residues threonine 602 to lysine 617 show a composition bias toward acidic residues.

This sequence belongs to the heat shock protein 70 family.

In terms of biological role, acts as a chaperone. This chain is Chaperone protein DnaK, found in Methanosarcina acetivorans (strain ATCC 35395 / DSM 2834 / JCM 12185 / C2A).